The chain runs to 120 residues: Immunoglobulin kappa variable 2D-28 (120 aa).

The first 19 residues, 1–19 (MRLPAQLLGLLMLWVSGSS), serve as a signal peptide directing secretion. In terms of domain architecture, Ig-like spans 20-120 (GDIVMTQSPL…YYCMQALQTP (101 aa)). Residues 21–43 (DIVMTQSPLSLPVTPGEPASISC) are framework-1. An intrachain disulfide couples Cys43 to Cys113. A complementarity-determining-1 region spans residues 44-59 (RSSQSLLHSNGYNYLD). Residues 60–74 (WYLQKPGQSPQLLIY) are framework-2. The segment at 75–81 (LGSNRAS) is complementarity-determining-2. Residues 82-113 (GVPDRFSGSGSGTDFTLKISRVEAEDVGVYYC) form a framework-3 region. A complementarity-determining-3 region spans residues 114–120 (MQALQTP).

In terms of assembly, immunoglobulins are composed of two identical heavy chains and two identical light chains; disulfide-linked.

Its subcellular location is the secreted. It localises to the cell membrane. Its function is as follows. V region of the variable domain of immunoglobulin light chains that participates in the antigen recognition. Immunoglobulins, also known as antibodies, are membrane-bound or secreted glycoproteins produced by B lymphocytes. In the recognition phase of humoral immunity, the membrane-bound immunoglobulins serve as receptors which, upon binding of a specific antigen, trigger the clonal expansion and differentiation of B lymphocytes into immunoglobulins-secreting plasma cells. Secreted immunoglobulins mediate the effector phase of humoral immunity, which results in the elimination of bound antigens. The antigen binding site is formed by the variable domain of one heavy chain, together with that of its associated light chain. Thus, each immunoglobulin has two antigen binding sites with remarkable affinity for a particular antigen. The variable domains are assembled by a process called V-(D)-J rearrangement and can then be subjected to somatic hypermutations which, after exposure to antigen and selection, allow affinity maturation for a particular antigen. In Homo sapiens (Human), this protein is Immunoglobulin kappa variable 2D-28.